The chain runs to 420 residues: MDRFHIQGPTTLKGEVVISGAKNSALPILFATLLTSEPVEIYNVPKLKDIDTAIKLLNQLGAQVEHQNIIVFSDTSKVHACCAPYDLVKSIRASIWILGPLVARFGYGKVWFPGGCSIGKRLVDLHIKGLKKLGAKIILGEEYVIASVNGRLQGAHIVMDKISVGATVTIMSAATLARGITIIDNAAREPEVIDTANFLIMLGTNIIGAGSNRIIIEGTQKLKGGRYCIIPDRIETGTFLVAAAISRSHVICLRSNPNILKCVLRKLRESGADINTGKDWISLNMHGRRPKAIKICTKPYPGFPTDMQAQFTLLNVVAIGVGKVIETIFENRFMHVPELIRMGARVQILNNTIICHGVDTLIGTRVVSTDLRASVSLVLAGCIAEGLTIIDQVNHVDRGYDNIERKLQNMGAHIQRITDK.

Position 22–23 (22–23 (KN)) interacts with phosphoenolpyruvate. Residue R92 coordinates UDP-N-acetyl-alpha-D-glucosamine. C116 (proton donor) is an active-site residue. At C116 the chain carries 2-(S-cysteinyl)pyruvic acid O-phosphothioketal. The UDP-N-acetyl-alpha-D-glucosamine site is built by D306 and I328.

It belongs to the EPSP synthase family. MurA subfamily.

It is found in the cytoplasm. It carries out the reaction phosphoenolpyruvate + UDP-N-acetyl-alpha-D-glucosamine = UDP-N-acetyl-3-O-(1-carboxyvinyl)-alpha-D-glucosamine + phosphate. The protein operates within cell wall biogenesis; peptidoglycan biosynthesis. Its function is as follows. Cell wall formation. Adds enolpyruvyl to UDP-N-acetylglucosamine. This chain is UDP-N-acetylglucosamine 1-carboxyvinyltransferase, found in Blochmanniella floridana.